Here is a 382-residue protein sequence, read N- to C-terminus: uncharacterized protein (382 aa).

The helical transmembrane segment at 1–21 threads the bilayer; sequence MKIILVVFVLIFVGVIGFNMI.

This sequence belongs to the membrane fusion protein (MFP) (TC 8.A.1) family.

The protein resides in the membrane. This is an uncharacterized protein from Haemophilus influenzae (strain ATCC 51907 / DSM 11121 / KW20 / Rd).